Consider the following 249-residue polypeptide: Proteasome subunit alpha type-7-1 (249 aa).

Ser-177 bears the Phosphoserine mark.

It belongs to the peptidase T1A family. In terms of assembly, the 26S proteasome consists of a 20S proteasome core and two 19S regulatory subunits. The 20S proteasome core is composed of 28 subunits that are arranged in four stacked rings, resulting in a barrel-shaped structure. The two end rings are each formed by seven alpha subunits, and the two central rings are each formed by seven beta subunits. The catalytic chamber with the active sites is on the inside of the barrel. Interacts with PI31; this interaction is reduced by PI31 ADP-ribosylation.

The protein localises to the cytoplasm. Its subcellular location is the nucleus. Functionally, the proteasome is a multicatalytic proteinase complex which is characterized by its ability to cleave peptides with Arg, Phe, Tyr, Leu, and Glu adjacent to the leaving group at neutral or slightly basic pH. The proteasome has an ATP-dependent proteolytic activity. This chain is Proteasome subunit alpha type-7-1 (Prosalpha4), found in Drosophila melanogaster (Fruit fly).